The chain runs to 359 residues: 3-dehydroquinate synthase (359 aa).

NAD(+)-binding positions include 105-109, 129-130, lysine 142, lysine 151, and 169-172; these read GVVGD, TT, and TIKT. Positions 184, 247, and 263 each coordinate Zn(2+).

This sequence belongs to the sugar phosphate cyclases superfamily. Dehydroquinate synthase family. The cofactor is Co(2+). Zn(2+) serves as cofactor. Requires NAD(+) as cofactor.

Its subcellular location is the cytoplasm. The catalysed reaction is 7-phospho-2-dehydro-3-deoxy-D-arabino-heptonate = 3-dehydroquinate + phosphate. It participates in metabolic intermediate biosynthesis; chorismate biosynthesis; chorismate from D-erythrose 4-phosphate and phosphoenolpyruvate: step 2/7. Functionally, catalyzes the conversion of 3-deoxy-D-arabino-heptulosonate 7-phosphate (DAHP) to dehydroquinate (DHQ). The polypeptide is 3-dehydroquinate synthase (Ruminiclostridium cellulolyticum (strain ATCC 35319 / DSM 5812 / JCM 6584 / H10) (Clostridium cellulolyticum)).